The primary structure comprises 250 residues: 5'-nucleotidase SurE (250 aa).

4 residues coordinate a divalent metal cation: Asp-8, Asp-9, Ser-39, and Asn-92.

This sequence belongs to the SurE nucleotidase family. The cofactor is a divalent metal cation.

Its subcellular location is the cytoplasm. The catalysed reaction is a ribonucleoside 5'-phosphate + H2O = a ribonucleoside + phosphate. Its function is as follows. Nucleotidase that shows phosphatase activity on nucleoside 5'-monophosphates. The protein is 5'-nucleotidase SurE of Vibrio cholerae serotype O1 (strain ATCC 39315 / El Tor Inaba N16961).